A 126-amino-acid chain; its full sequence is Holo-[acyl-carrier-protein] synthase (126 aa).

Mg(2+)-binding residues include aspartate 9 and glutamate 58.

The protein belongs to the P-Pant transferase superfamily. AcpS family. Mg(2+) is required as a cofactor.

Its subcellular location is the cytoplasm. It carries out the reaction apo-[ACP] + CoA = holo-[ACP] + adenosine 3',5'-bisphosphate + H(+). Transfers the 4'-phosphopantetheine moiety from coenzyme A to a Ser of acyl-carrier-protein. The polypeptide is Holo-[acyl-carrier-protein] synthase (Klebsiella pneumoniae subsp. pneumoniae (strain ATCC 700721 / MGH 78578)).